The sequence spans 273 residues: DNA replication complex GINS protein psf2 (273 aa).

2 disordered regions span residues 88–110 (KEDP…SQPG) and 240–273 (ASAE…DMGL). Residues 244-257 (ATRREEEEEARRGG) show a composition bias toward basic and acidic residues. The segment covering 261 to 273 (GDGDEDSDEDMGL) has biased composition (acidic residues).

This sequence belongs to the GINS2/PSF2 family. In terms of assembly, component of the GINS complex which is a heterotetramer of div-26/sld5, drc-1/psf1, drc-2/psf2 and drc-3/psf3.

Its subcellular location is the nucleus. The GINS complex plays an essential role in the initiation of DNA replication. Has a role in chromosome segregation. This chain is DNA replication complex GINS protein psf2 (drc-2), found in Neurospora crassa (strain ATCC 24698 / 74-OR23-1A / CBS 708.71 / DSM 1257 / FGSC 987).